Here is a 98-residue protein sequence, read N- to C-terminus: Citrate lyase acyl carrier protein (98 aa).

At Ser14 the chain carries O-(phosphoribosyl dephospho-coenzyme A)serine.

This sequence belongs to the CitD family. In terms of assembly, oligomer with a subunit composition of (alpha,beta,gamma)6.

The protein localises to the cytoplasm. Functionally, covalent carrier of the coenzyme of citrate lyase. The protein is Citrate lyase acyl carrier protein of Salmonella arizonae (strain ATCC BAA-731 / CDC346-86 / RSK2980).